The sequence spans 308 residues: Ribonuclease 3 (308 aa).

An RNase III domain is found at 20 to 145; that stretch reads YLRFYKMLGF…LVGAIYLDRG (126 aa). Mg(2+) is bound at residue E62. The active site involves D66. Mg(2+)-binding residues include N131 and E134. Residue E134 is part of the active site. A DRBM domain is found at 173 to 242; sequence NFKSKLIEWS…ARVALGKIKN (70 aa). Positions 261 to 281 are disordered; the sequence is QEEVTVSDSKPSDSGAVTPDL.

Belongs to the ribonuclease III family. As to quaternary structure, homodimer. Mg(2+) serves as cofactor.

It localises to the cytoplasm. The catalysed reaction is Endonucleolytic cleavage to 5'-phosphomonoester.. Functionally, digests double-stranded RNA. Involved in the processing of primary rRNA transcript to yield the immediate precursors to the large and small rRNAs (23S and 16S). Processes some mRNAs, and tRNAs when they are encoded in the rRNA operon. Processes pre-crRNA and tracrRNA of type II CRISPR loci if present in the organism. This chain is Ribonuclease 3, found in Phocaeicola vulgatus (strain ATCC 8482 / DSM 1447 / JCM 5826 / CCUG 4940 / NBRC 14291 / NCTC 11154) (Bacteroides vulgatus).